The sequence spans 840 residues: 9-beta-pimara-7,15-diene synthase, chloroplastic (840 aa).

A chloroplast-targeting transit peptide spans 1–56 (MASPMEAVARSSLVLAPRRRRALGLLPAAAAPFVLDCRRRHNGGMRRPHVSFACSA). Mg(2+) contacts are provided by aspartate 589, aspartate 593, asparagine 733, serine 737, and glutamate 741. The short motif at 589–593 (DDFFD) is the DDXXD motif element.

This sequence belongs to the terpene synthase family. Mg(2+) serves as cofactor.

It localises to the plastid. It is found in the chloroplast. It carries out the reaction 9alpha-copalyl diphosphate = 9beta-pimara-7,15-diene + diphosphate. Involved in the biosynthesis of momilactone A and B phytoalexins. Catalyzes the conversion of syn-copalyl diphosphate to the phytoalexin precursor syn-pimara-7,15-diene. This Oryza sativa subsp. indica (Rice) protein is 9-beta-pimara-7,15-diene synthase, chloroplastic.